We begin with the raw amino-acid sequence, 463 residues long: L-2-hydroxyglutarate dehydrogenase, mitochondrial (463 aa).

The N-terminal 51 residues, 1-51 (MVPALRYLVGACGRARGLFAGGSPGACGFASGRPRPLCGGSRSASTSSFDI), are a transit peptide targeting the mitochondrion. Lys-104, Lys-155, and Lys-173 each carry N6-acetyllysine.

Belongs to the L2HGDH family. It depends on FAD as a cofactor. Widely expressed. Highly expressed in brain, testis and muscle. Expressed to a lower extent in lymphocytes, fibroblasts, keratinocytes, placenta, bladder, small intestine, liver and bone marrow.

It localises to the mitochondrion. It catalyses the reaction (S)-2-hydroxyglutarate + A = 2-oxoglutarate + AH2. The chain is L-2-hydroxyglutarate dehydrogenase, mitochondrial (L2HGDH) from Homo sapiens (Human).